The following is a 179-amino-acid chain: Large ribosomal subunit protein uL6 (179 aa).

The protein belongs to the universal ribosomal protein uL6 family. Part of the 50S ribosomal subunit.

This protein binds to the 23S rRNA, and is important in its secondary structure. It is located near the subunit interface in the base of the L7/L12 stalk, and near the tRNA binding site of the peptidyltransferase center. The protein is Large ribosomal subunit protein uL6 of Fructilactobacillus sanfranciscensis (Lactobacillus sanfranciscensis).